The following is a 740-amino-acid chain: Eukaryotic translation initiation factor 3 subunit B (740 aa).

Residues 1 to 10 (MAPSFDTLSE) show a composition bias toward polar residues. A disordered region spans residues 1 to 20 (MAPSFDTLSEQDLHEEEEEE). Residues 40 to 126 (TFVVIDGLPV…HTLLVNKLMD (87 aa)) form the RRM domain. WD repeat units follow at residues 193 to 230 (AHWTQLFAQWSPKGTYLASVHPQGVQLWGGPAFSKQKQ), 232 to 289 (PHPF…RSFV), 302 to 343 (EPKK…LLGK), 455 to 496 (SLKD…SFFA), 513 to 556 (IEKK…EKPE), and 571 to 609 (IEHYGVTDIDWDPTGRYVVSSASVWTHQLENGWNMHTFA). Residues 695 to 721 (DAYGLPEEADDPKLAKDAAATTQEQGE) are disordered.

The protein belongs to the eIF-3 subunit B family. In terms of assembly, component of the eukaryotic translation initiation factor 3 (eIF-3) complex.

It localises to the cytoplasm. Functionally, RNA-binding component of the eukaryotic translation initiation factor 3 (eIF-3) complex, which is involved in protein synthesis of a specialized repertoire of mRNAs and, together with other initiation factors, stimulates binding of mRNA and methionyl-tRNAi to the 40S ribosome. The eIF-3 complex specifically targets and initiates translation of a subset of mRNAs involved in cell proliferation. This is Eukaryotic translation initiation factor 3 subunit B (prt1) from Neosartorya fischeri (strain ATCC 1020 / DSM 3700 / CBS 544.65 / FGSC A1164 / JCM 1740 / NRRL 181 / WB 181) (Aspergillus fischerianus).